A 402-amino-acid chain; its full sequence is 4-hydroxy-3-methylbut-2-enyl diphosphate reductase (402 aa).

Cys-66 contributes to the [4Fe-4S] cluster binding site. Position 96 (His-96) interacts with (2E)-4-hydroxy-3-methylbut-2-enyl diphosphate. Position 96 (His-96) interacts with dimethylallyl diphosphate. Residue His-96 participates in isopentenyl diphosphate binding. Position 157 (Cys-157) interacts with [4Fe-4S] cluster. Position 185 (His-185) interacts with (2E)-4-hydroxy-3-methylbut-2-enyl diphosphate. Position 185 (His-185) interacts with dimethylallyl diphosphate. Position 185 (His-185) interacts with isopentenyl diphosphate. Residue Glu-187 is the Proton donor of the active site. Residue Thr-250 participates in (2E)-4-hydroxy-3-methylbut-2-enyl diphosphate binding. Cys-288 is a [4Fe-4S] cluster binding site. (2E)-4-hydroxy-3-methylbut-2-enyl diphosphate-binding residues include Ser-317, Ser-318, Asn-319, and Ser-379. Dimethylallyl diphosphate contacts are provided by Ser-317, Ser-318, Asn-319, and Ser-379. 4 residues coordinate isopentenyl diphosphate: Ser-317, Ser-318, Asn-319, and Ser-379.

It belongs to the IspH family. It depends on [4Fe-4S] cluster as a cofactor.

The enzyme catalyses isopentenyl diphosphate + 2 oxidized [2Fe-2S]-[ferredoxin] + H2O = (2E)-4-hydroxy-3-methylbut-2-enyl diphosphate + 2 reduced [2Fe-2S]-[ferredoxin] + 2 H(+). It catalyses the reaction dimethylallyl diphosphate + 2 oxidized [2Fe-2S]-[ferredoxin] + H2O = (2E)-4-hydroxy-3-methylbut-2-enyl diphosphate + 2 reduced [2Fe-2S]-[ferredoxin] + 2 H(+). It functions in the pathway isoprenoid biosynthesis; dimethylallyl diphosphate biosynthesis; dimethylallyl diphosphate from (2E)-4-hydroxy-3-methylbutenyl diphosphate: step 1/1. Its pathway is isoprenoid biosynthesis; isopentenyl diphosphate biosynthesis via DXP pathway; isopentenyl diphosphate from 1-deoxy-D-xylulose 5-phosphate: step 6/6. Its function is as follows. Catalyzes the conversion of 1-hydroxy-2-methyl-2-(E)-butenyl 4-diphosphate (HMBPP) into a mixture of isopentenyl diphosphate (IPP) and dimethylallyl diphosphate (DMAPP). Acts in the terminal step of the DOXP/MEP pathway for isoprenoid precursor biosynthesis. This is 4-hydroxy-3-methylbut-2-enyl diphosphate reductase from Gloeothece citriformis (strain PCC 7424) (Cyanothece sp. (strain PCC 7424)).